A 418-amino-acid polypeptide reads, in one-letter code: Serum response factor homolog A (418 aa).

Disordered stretches follow at residues 14–67 (LGNV…GKKA), 144–170 (CLNT…LLQQ), 301–351 (RLGK…NNNS), and 388–418 (SSSS…FPPC). Low complexity-rich tracts occupy residues 22 to 39 (PSSP…PTST) and 51 to 61 (TSEPSSPSTGE). The MADS-box domain occupies 67–127 (AGRRKIKIEF…GHVYTFATAK (61 aa)). 3 stretches are compositionally biased toward low complexity: residues 150–170 (NPNS…LLQQ), 306–351 (NNNN…NNNS), and 388–399 (SSSSASSSPASP). A compositionally biased stretch (polar residues) spans 400-418 (NQFNYSNHSMPLNNQFPPC).

Its subcellular location is the nucleus. Functionally, required for proper slug migration, spore differentiation and stalk differentiation (under nonbuffered conditions). Could be involved in late events of spore maturation necessary for spore stability. In Dictyostelium discoideum (Social amoeba), this protein is Serum response factor homolog A (srfA).